We begin with the raw amino-acid sequence, 525 residues long: Delta(24)-sterol reductase homolog dhcr-24 (525 aa).

A run of 2 helical transmembrane segments spans residues Trp-27–Phe-47 and Ser-214–Ile-234. In terms of domain architecture, FAD-binding PCMH-type spans Phe-47–Cys-239.

It belongs to the FAD-binding oxidoreductase/transferase type 4 family. Requires FAD as cofactor.

The protein resides in the endoplasmic reticulum membrane. Its subcellular location is the golgi apparatus membrane. The enzyme catalyses cholesterol + NADP(+) = desmosterol + NADPH + H(+). It carries out the reaction lanosterol + NADPH + H(+) = 24,25-dihydrolanosterol + NADP(+). It catalyses the reaction 5alpha-cholest-8-en-3beta-ol + NADP(+) = zymosterol + NADPH + H(+). It participates in steroid biosynthesis; cholesterol biosynthesis. Catalyzes the reduction of the delta-24 double bond of sterol intermediates during cholesterol biosynthesis. In Caenorhabditis elegans, this protein is Delta(24)-sterol reductase homolog dhcr-24.